A 423-amino-acid chain; its full sequence is Tyrosine--tRNA ligase (423 aa).

Y35 is a binding site for L-tyrosine. Positions 40–49 match the 'HIGH' region motif; that stretch reads PTAPSLHAGH. Residues Y170 and Q174 each contribute to the L-tyrosine site. The short motif at 230 to 234 is the 'KMSKS' region element; sequence KFGKS. K233 contributes to the ATP binding site. Positions 355 to 412 constitute an S4 RNA-binding domain; it reads DLITDLLVATGLSASKGAARRTIAEGGVSVNNVKIDSDEWTPQASDFLHGRWLVLRRG.

The protein belongs to the class-I aminoacyl-tRNA synthetase family. TyrS type 1 subfamily. As to quaternary structure, homodimer.

The protein localises to the cytoplasm. It catalyses the reaction tRNA(Tyr) + L-tyrosine + ATP = L-tyrosyl-tRNA(Tyr) + AMP + diphosphate + H(+). In terms of biological role, catalyzes the attachment of tyrosine to tRNA(Tyr) in a two-step reaction: tyrosine is first activated by ATP to form Tyr-AMP and then transferred to the acceptor end of tRNA(Tyr). The sequence is that of Tyrosine--tRNA ligase from Mycobacterium sp. (strain JLS).